The following is a 1480-amino-acid chain: Cystic fibrosis transmembrane conductance regulator (1480 aa).

Over 1–77 the chain is Cytoplasmic; it reads MQRSPLEKAS…KLINALRRCF (77 aa). The helical transmembrane segment at 78-98 threads the bilayer; that stretch reads FWRFMFYGIFLYLGEVTKAVQ. Residues 81–365 form the ABC transmembrane type-1 1 domain; it reads FMFYGIFLYL…WAVQTWYDSL (285 aa). At 99–122 the chain is on the extracellular side; that stretch reads PLLLGRIIASYDPDNKEERSIAIY. A helical membrane pass occupies residues 123–146; the sequence is LGIGLCLLFIVRTLLLHPAIFGLH. Topologically, residues 147 to 195 are cytoplasmic; it reads HIGMQMRIAMFSLIYKKTLKLSSRVLDKISIGQLVSLLSNNLNKFDEGL. The chain crosses the membrane as a helical span at residues 196 to 216; the sequence is ALAHFVWIAPLQVALLMGLIW. Residues 217 to 222 lie on the Extracellular side of the membrane; the sequence is ELLQAS. A helical transmembrane segment spans residues 223 to 243; that stretch reads AFCGLGFLIVLALFQAGLGRM. Residues 244–298 lie on the Cytoplasmic side of the membrane; that stretch reads MMKYRDQRAGKISERLVITSEMIENIQSVKAYCWEEAMEKMIENLRQTELKLTRK. A helical membrane pass occupies residues 299–319; that stretch reads AAYVRYFNSSAFFFSGFFVVF. At 320 to 339 the chain is on the extracellular side; that stretch reads LSVLPYALIKGIILRKIFTT. Residues 340–358 traverse the membrane as a helical segment; that stretch reads ISFCIVLRMAVTRQFPWAV. Residues 359–858 are Cytoplasmic-facing; sequence QTWYDSLGAI…YLRYITVHKS (500 aa). ATP is bound by residues Trp401, Ser434, 458–465, and Gln493; that span reads GSTGAGKT. The 224-residue stretch at 423–646 folds into the ABC transporter 1 domain; the sequence is NGDDSLFFSN…RPDFSSKLMG (224 aa). Cys524 carries S-palmitoyl cysteine lipidation. Phosphoserine is present on residues Ser549 and Ser660. The tract at residues 654–831 is disordered R region; sequence SAERRNSILT…EEINEEDLKE (178 aa). Ser670 is subject to Phosphoserine; by PKA. Ser686 carries the phosphoserine modification. Lys688 participates in a covalent cross-link: Glycyl lysine isopeptide (Lys-Gly) (interchain with G-Cter in ubiquitin). Residues Ser700 and Ser712 each carry the phosphoserine modification. A Phosphothreonine modification is found at Thr717. A phosphoserine mark is found at Ser737, Ser753, Ser768, Ser790, Ser795, and Ser813. A helical membrane pass occupies residues 859–879; it reads LIFVLIWCLVIFLAEVAASLV. An ABC transmembrane type-1 2 domain is found at 859–1155; it reads LIFVLIWCLV…AVNSSIDVDS (297 aa). The Extracellular segment spans residues 880-918; it reads VLWLLGNTPLQDKGNSTHSRNNSYAVIITSTSSYYVFYI. N-linked (GlcNAc...) asparagine glycosylation is found at Asn894 and Asn900. The chain crosses the membrane as a discontinuously helical span at residues 919 to 939; sequence YVGVADTLLAMGFFRGLPLVH. Residues 940-990 are Cytoplasmic-facing; sequence TLITVSKILHHKMLHSVLQAPMSTLNTLKAGGILNRFSKDIAILDDLLPLT. Residues 991–1011 traverse the membrane as a helical segment; it reads IFDFIQLLLIVIGAIAVVAVL. Residues 1012-1013 are Extracellular-facing; sequence QP. Residues 1014–1034 traverse the membrane as a helical segment; the sequence is YIFVATVPVIVAFIMLRAYFL. Over 1035-1095 the chain is Cytoplasmic; sequence QTSQQLKQLE…TANWFLYLST (61 aa). A helical transmembrane segment spans residues 1096–1116; that stretch reads LRWFQMRIEMIFVIFFIAVTF. The Extracellular portion of the chain corresponds to 1117 to 1130; it reads ISILTTGEGEGRVG. Residues 1131 to 1151 traverse the membrane as a helical segment; sequence IILTLAMNIMSTLQWAVNSSI. Topologically, residues 1152 to 1480 are cytoplasmic; it reads DVDSLMRSVS…TEEEVQDTRL (329 aa). An ABC transporter 2 domain is found at 1210–1443; it reads MTVKDLTAKY…RSLFRQAISP (234 aa). ATP-binding positions include Tyr1219 and 1244-1251; that span reads GRTGSGKS. Residues 1386-1480 form an interaction with GORASP2 region; sequence RTLKQAFADC…TEEEVQDTRL (95 aa). Cys1395 carries S-palmitoyl cysteine lipidation. 2 positions are modified to phosphoserine: Ser1444 and Ser1456. Residues 1452–1480 form a disordered region; it reads HRNSSKCKSKPQIAALKEETEEEVQDTRL. The segment covering 1470-1480 has biased composition (acidic residues); that stretch reads ETEEEVQDTRL. Residues 1478-1480 carry the PDZ-binding motif; it reads TRL.

Belongs to the ABC transporter superfamily. ABCC family. CFTR transporter (TC 3.A.1.202) subfamily. As to quaternary structure, monomer; does not require oligomerization for channel activity. May form oligomers in the membrane. Interacts with SLC26A3, SLC26A6 and NHERF1. Interacts with SHANK2. Interacts with MYO6. Interacts (via C-terminus) with GOPC (via PDZ domain); this promotes CFTR internalization and thereby decreases channel activity. Interacts with SLC4A7 through NHERF1. Found in a complex with MYO5B and RAB11A. Interacts with ANO1. Interacts with SLC26A8. Interacts with AHCYL1; the interaction increases CFTR activity. Interacts with CSE1L. The core-glycosylated form interacts with GORASP2 (via PDZ GRASP-type 1 domain) in respone to ER stress. Interacts with MARCHF2; the interaction leads to CFTR ubiqtuitination and degradation. Interacts with ADGRG2. N-glycosylated. Post-translationally, phosphorylated; cAMP treatment promotes phosphorylation and activates the channel. Dephosphorylation decreases the ATPase activity (in vitro). Phosphorylation at PKA sites activates the channel. Phosphorylation at PKC sites enhances the response to phosphorylation by PKA. Phosphorylated by AMPK; this inhibits channel activity. In terms of processing, ubiquitinated, leading to its degradation in the lysosome. Deubiquitination by USP10 in early endosomes enhances its endocytic recycling to the cell membrane. Ubiquitinated by RNF185 during ER stress. Ubiquitinated by MARCHF2.

The protein resides in the apical cell membrane. It localises to the early endosome membrane. It is found in the cell membrane. The protein localises to the recycling endosome membrane. Its subcellular location is the endoplasmic reticulum membrane. The protein resides in the nucleus. It catalyses the reaction ATP + H2O + closed Cl(-) channel = ADP + phosphate + open Cl(-) channel.. It carries out the reaction chloride(in) = chloride(out). The enzyme catalyses hydrogencarbonate(in) = hydrogencarbonate(out). The catalysed reaction is ATP + H2O = ADP + phosphate + H(+). In terms of biological role, epithelial ion channel that plays an important role in the regulation of epithelial ion and water transport and fluid homeostasis. Mediates the transport of chloride ions across the cell membrane. Possesses an intrinsic ATPase activity and utilizes ATP to gate its channel; the passive flow of anions through the channel is gated by cycles of ATP binding and hydrolysis by the ATP-binding domains. The ion channel is also permeable to HCO(3)(-); selectivity depends on the extracellular chloride concentration. Exerts its function also by modulating the activity of other ion channels and transporters. Contributes to the regulation of the pH and the ion content of the epithelial fluid layer. Modulates the activity of the epithelial sodium channel (ENaC) complex, in part by regulating the cell surface expression of the ENaC complex. May regulate bicarbonate secretion and salvage in epithelial cells by regulating the transporter SLC4A7. Can inhibit the chloride channel activity of ANO1. Plays a role in the chloride and bicarbonate homeostasis during sperm epididymal maturation and capacitation. This Pan troglodytes (Chimpanzee) protein is Cystic fibrosis transmembrane conductance regulator.